Here is a 165-residue protein sequence, read N- to C-terminus: Growth arrest and DNA damage-inducible protein GADD45 alpha (165 aa).

Thr-2 carries the phosphothreonine modification.

The protein belongs to the GADD45 family. In terms of assembly, interacts with AURKA, PCNA, GADD45GIP1 and MAPK14.

It localises to the nucleus. Might affect PCNA interaction with some CDK (cell division protein kinase) complexes; stimulates DNA excision repair in vitro and inhibits entry of cells into S phase. In T-cells, functions as a regulator of p38 MAPKs by inhibiting p88 phosphorylation and activity. In Rattus norvegicus (Rat), this protein is Growth arrest and DNA damage-inducible protein GADD45 alpha (Gadd45a).